We begin with the raw amino-acid sequence, 972 residues long: Isoleucine--tRNA ligase (972 aa).

Residues 63 to 73 (PYANGNIHIGH) carry the 'HIGH' region motif. E603 contributes to the L-isoleucyl-5'-AMP binding site. A 'KMSKS' region motif is present at residues 644–648 (KMSKS). Position 647 (K647) interacts with ATP.

This sequence belongs to the class-I aminoacyl-tRNA synthetase family. IleS type 1 subfamily. Monomer.

Its subcellular location is the cytoplasm. The catalysed reaction is tRNA(Ile) + L-isoleucine + ATP = L-isoleucyl-tRNA(Ile) + AMP + diphosphate. Its function is as follows. Catalyzes the attachment of isoleucine to tRNA(Ile). As IleRS can inadvertently accommodate and process structurally similar amino acids such as valine, to avoid such errors it has two additional distinct tRNA(Ile)-dependent editing activities. One activity is designated as 'pretransfer' editing and involves the hydrolysis of activated Val-AMP. The other activity is designated 'posttransfer' editing and involves deacylation of mischarged Val-tRNA(Ile). This chain is Isoleucine--tRNA ligase, found in Brucella abortus (strain 2308).